A 487-amino-acid chain; its full sequence is FAD-dependent oxidoreductase domain-containing protein 1 (487 aa).

A helical transmembrane segment spans residues 62–82 (EQADVVIIGGGILGLSVAFWL).

Associates with components of the mitochondrial respiratory chain complex I. FAD is required as a cofactor.

The protein localises to the mitochondrion inner membrane. Its function is as follows. Required for the assembly of the mitochondrial membrane respiratory chain NADH dehydrogenase (Complex I). Involved in mid-late stages of complex I assembly. In Mus musculus (Mouse), this protein is FAD-dependent oxidoreductase domain-containing protein 1 (Foxred1).